Here is a 255-residue protein sequence, read N- to C-terminus: 4-hydroxy-tetrahydrodipicolinate reductase (255 aa).

Residues 8-13, 88-90, and 112-115 each bind NAD(+); these read GSTGRM, ATT, and SSNM. Catalysis depends on His144, which acts as the Proton donor/acceptor. His145 lines the (S)-2,3,4,5-tetrahydrodipicolinate pocket. The active-site Proton donor is Lys148. Residue 154–155 participates in (S)-2,3,4,5-tetrahydrodipicolinate binding; the sequence is GT.

Belongs to the DapB family.

It localises to the cytoplasm. It catalyses the reaction (S)-2,3,4,5-tetrahydrodipicolinate + NAD(+) + H2O = (2S,4S)-4-hydroxy-2,3,4,5-tetrahydrodipicolinate + NADH + H(+). It carries out the reaction (S)-2,3,4,5-tetrahydrodipicolinate + NADP(+) + H2O = (2S,4S)-4-hydroxy-2,3,4,5-tetrahydrodipicolinate + NADPH + H(+). It functions in the pathway amino-acid biosynthesis; L-lysine biosynthesis via DAP pathway; (S)-tetrahydrodipicolinate from L-aspartate: step 4/4. Catalyzes the conversion of 4-hydroxy-tetrahydrodipicolinate (HTPA) to tetrahydrodipicolinate. This Sulfurovum sp. (strain NBC37-1) protein is 4-hydroxy-tetrahydrodipicolinate reductase.